Consider the following 84-residue polypeptide: uncharacterized protein (84 aa).

Residues 8–47 (CECCDRDLPPDSGDAMICTFECTFCAGCAETKLGGTCPNC) are cysteine motif.

This is an uncharacterized protein from Rhizobium meliloti (strain 1021) (Ensifer meliloti).